A 1161-amino-acid polypeptide reads, in one-letter code: DNA-directed RNA polymerase III subunit 2 (1161 aa).

The C4-type zinc finger occupies 1104-1125 (CRACGLLGYYNYKLKKAVCTTC).

It belongs to the RNA polymerase beta chain family. As to quaternary structure, component of the RNA polymerase III (Pol III) complex consisting of 17 subunits.

It localises to the nucleus. It catalyses the reaction RNA(n) + a ribonucleoside 5'-triphosphate = RNA(n+1) + diphosphate. Its function is as follows. DNA-dependent RNA polymerase catalyzes the transcription of DNA into RNA using the four ribonucleoside triphosphates as substrates. Second largest core component of RNA polymerase III which synthesizes small RNAs, such as 5S rRNA and tRNAs. Proposed to contribute to the polymerase catalytic activity and forms the polymerase active center together with the largest subunit. Pol III is composed of mobile elements and NRPC2 is part of the core element with the central large cleft and probably a clamp element that moves to open and close the cleft. Functionally, essential for the completion of the three rounds of mitosis in female megaspores required for the development of mature gametophytes. The polypeptide is DNA-directed RNA polymerase III subunit 2 (Arabidopsis thaliana (Mouse-ear cress)).